The following is a 591-amino-acid chain: Aspartate--tRNA(Asp/Asn) ligase (591 aa).

Glu174 is an L-aspartate binding site. The tract at residues 198 to 201 is aspartate; sequence QLFK. Arg220 serves as a coordination point for L-aspartate. ATP contacts are provided by residues 220–222 and Gln229; that span reads RDE. His450 lines the L-aspartate pocket. Glu483 contacts ATP. Arg490 lines the L-aspartate pocket. ATP is bound at residue 535–538; that stretch reads GLDR.

The protein belongs to the class-II aminoacyl-tRNA synthetase family. Type 1 subfamily. In terms of assembly, homodimer.

The protein resides in the cytoplasm. The catalysed reaction is tRNA(Asx) + L-aspartate + ATP = L-aspartyl-tRNA(Asx) + AMP + diphosphate. Aspartyl-tRNA synthetase with relaxed tRNA specificity since it is able to aspartylate not only its cognate tRNA(Asp) but also tRNA(Asn). Reaction proceeds in two steps: L-aspartate is first activated by ATP to form Asp-AMP and then transferred to the acceptor end of tRNA(Asp/Asn). This Pseudomonas aeruginosa (strain LESB58) protein is Aspartate--tRNA(Asp/Asn) ligase.